Reading from the N-terminus, the 192-residue chain is Putative acetyltransferase SH0499 (192 aa).

This sequence belongs to the transferase hexapeptide repeat family.

In Staphylococcus haemolyticus (strain JCSC1435), this protein is Putative acetyltransferase SH0499.